A 356-amino-acid chain; its full sequence is Histidinol-phosphate aminotransferase (356 aa).

N6-(pyridoxal phosphate)lysine is present on lysine 214.

Belongs to the class-II pyridoxal-phosphate-dependent aminotransferase family. Histidinol-phosphate aminotransferase subfamily. In terms of assembly, homodimer. Pyridoxal 5'-phosphate is required as a cofactor.

It carries out the reaction L-histidinol phosphate + 2-oxoglutarate = 3-(imidazol-4-yl)-2-oxopropyl phosphate + L-glutamate. It functions in the pathway amino-acid biosynthesis; L-histidine biosynthesis; L-histidine from 5-phospho-alpha-D-ribose 1-diphosphate: step 7/9. In Shigella flexneri serotype 5b (strain 8401), this protein is Histidinol-phosphate aminotransferase.